The chain runs to 317 residues: SVP1-like protein 2 (317 aa).

2 WD repeats span residues 119–159 and 164–203; these read AHST…KMAE and VDHAIIFSLAISPSNNLLAVTSDKSTLHVFNLPHPRNAPY.

This sequence belongs to the WD repeat PROPPIN family.

It is found in the vacuole membrane. The protein localises to the cytoplasmic vesicle membrane. Its function is as follows. Involved in mitochondrial or peroxisomal functions and amino acid signaling pathways. The protein is SVP1-like protein 2 (hsv2) of Emericella nidulans (strain FGSC A4 / ATCC 38163 / CBS 112.46 / NRRL 194 / M139) (Aspergillus nidulans).